Consider the following 237-residue polypeptide: DNA repair protein RecO (237 aa).

Belongs to the RecO family.

Involved in DNA repair and RecF pathway recombination. In Flavobacterium johnsoniae (strain ATCC 17061 / DSM 2064 / JCM 8514 / BCRC 14874 / CCUG 350202 / NBRC 14942 / NCIMB 11054 / UW101) (Cytophaga johnsonae), this protein is DNA repair protein RecO.